Here is a 356-residue protein sequence, read N- to C-terminus: Protein ATP1B4 (356 aa).

Residues 1-109 (MRRQLRSRRA…SLARTGQSRS (109 aa)) are Nuclear-facing. The segment at 32–77 (LADEEEEAEEEAQVMMVPGLEEEEEEEEGKEEEEEREEEEGQGQST) is disordered. Composition is skewed to acidic residues over residues 33–43 (ADEEEEAEEEA) and 51–72 (LEEEEEEEEGKEEEEEREEEEG). The chain crosses the membrane as a helical; Signal-anchor for type II membrane protein span at residues 110–130 (LILVIYFFFYASLAAVITLFI). The Perinuclear space portion of the chain corresponds to 131-356 (YMLFLAISPY…RIIFTLNIET (226 aa)).

It belongs to the X(+)/potassium ATPases subunit beta family. In terms of assembly, does not associate with known Na,K-ATPase alpha-subunits. Associates with a SMAD7-transcriptional complex. Interacts with SNW1 and TOR1AIP1. Expressed in perinatal myocytes (at protein level). Expressed during postnatal development in skeletal muscle and heart.

The protein localises to the nucleus inner membrane. In terms of biological role, may act as a transcriptional coregulator during muscle development through its interaction with SNW1. Has lost its ancestral function as a Na,K-ATPase beta-subunit. This is Protein ATP1B4 (Atp1b4) from Rattus norvegicus (Rat).